We begin with the raw amino-acid sequence, 108 residues long: Malonate decarboxylase acyl carrier protein (108 aa).

At S35 the chain carries O-(phosphoribosyl dephospho-coenzyme A)serine.

It belongs to the MdcC family. Post-translationally, covalently binds the prosthetic group of malonate decarboxylase.

It localises to the cytoplasm. Its function is as follows. Subunit of malonate decarboxylase, it is an acyl carrier protein to which acetyl and malonyl thioester residues are bound via a 2'-(5''-phosphoribosyl)-3'-dephospho-CoA prosthetic group and turn over during the catalytic mechanism. The chain is Malonate decarboxylase acyl carrier protein from Burkholderia cepacia (Pseudomonas cepacia).